The chain runs to 243 residues: Large ribosomal subunit protein uL30 (243 aa).

Positions 1 to 31 (MADKILTPESQLKKSKAQQKSAEQVAAERAA) are disordered. Over residues 18 to 28 (QQKSAEQVAAE) the composition is skewed to low complexity.

Belongs to the universal ribosomal protein uL30 family.

The chain is Large ribosomal subunit protein uL30 (RPL7) from Eremothecium gossypii (strain ATCC 10895 / CBS 109.51 / FGSC 9923 / NRRL Y-1056) (Yeast).